We begin with the raw amino-acid sequence, 517 residues long: ATP synthase subunit alpha 2 (517 aa).

173 to 180 (GDRQTGKT) is an ATP binding site.

It belongs to the ATPase alpha/beta chains family. F-type ATPases have 2 components, CF(1) - the catalytic core - and CF(0) - the membrane proton channel. CF(1) has five subunits: alpha(3), beta(3), gamma(1), delta(1), epsilon(1). CF(0) has three main subunits: a(1), b(2) and c(9-12). The alpha and beta chains form an alternating ring which encloses part of the gamma chain. CF(1) is attached to CF(0) by a central stalk formed by the gamma and epsilon chains, while a peripheral stalk is formed by the delta and b chains.

Its subcellular location is the cell inner membrane. It carries out the reaction ATP + H2O + 4 H(+)(in) = ADP + phosphate + 5 H(+)(out). Produces ATP from ADP in the presence of a proton gradient across the membrane. The alpha chain is a regulatory subunit. This is ATP synthase subunit alpha 2 from Legionella pneumophila subsp. pneumophila (strain Philadelphia 1 / ATCC 33152 / DSM 7513).